The primary structure comprises 755 residues: Lysosome membrane protein 2-B (755 aa).

At 1–6 (MKHIGR) the chain is on the cytoplasmic side. The helical transmembrane segment at 7–27 (IVSFPIGLVLIAVGIIIFVVV) threads the bilayer. N-linked (GlcNAc...) asparagine glycosylation is found at N28, N76, N379, N465, N497, N588, N607, and N680. The Lumenal segment spans residues 28–727 (NRTIKDEFKK…AYKVDSFRYA (700 aa)). The helical transmembrane segment at 728–748 (ITVILIVVGGFLSLISGGLFV) threads the bilayer. At 749–755 (LDKIIDL) the chain is on the cytoplasmic side. The Di-leucine motif signature appears at 752 to 753 (II).

It belongs to the CD36 family. Post-translationally, heavily glycosylated.

The protein resides in the lysosome membrane. Functionally, may act as a lysosomal receptor. May be involved in macropinocytosis and fluid phase exocytosis. The chain is Lysosome membrane protein 2-B (lmpB) from Dictyostelium discoideum (Social amoeba).